A 445-amino-acid chain; its full sequence is Chromosome partition protein MukF (445 aa).

The segment at 213-241 (LSETSATLRELQDTLQAAGDELQTQILDI) is leucine-zipper.

Belongs to the MukF family. Interacts, and probably forms a ternary complex, with MukE and MukB via its C-terminal region. The complex formation is stimulated by calcium or magnesium. It is required for an interaction between MukE and MukB.

Its subcellular location is the cytoplasm. It is found in the nucleoid. Involved in chromosome condensation, segregation and cell cycle progression. May participate in facilitating chromosome segregation by condensation DNA from both sides of a centrally located replisome during cell division. Not required for mini-F plasmid partitioning. Probably acts via its interaction with MukB and MukE. Overexpression results in anucleate cells. It has a calcium binding activity. This Vibrio cholerae serotype O1 (strain ATCC 39315 / El Tor Inaba N16961) protein is Chromosome partition protein MukF.